An 817-amino-acid polypeptide reads, in one-letter code: Nuclear hormone receptor family member nhr-48 (817 aa).

The segment at 49 to 91 is disordered; it reads YNDDKDDPFYEDEGSGGGTSGGGKKSSRKRANTTSSSGGNEKE. Positions 52–62 are enriched in acidic residues; sequence DKDDPFYEDEG. Residues 63-72 are compositionally biased toward gly residues; the sequence is SGGGTSGGGK. The nuclear receptor DNA-binding region spans 97 to 172; sequence NKVCRVCGDK…VGMKKEWIMS (76 aa). 2 consecutive NR C4-type zinc fingers follow at residues 100 to 120 and 136 to 155; these read CRVC…CESC and CPFN…CQRC. Over residues 202 to 212 the composition is skewed to acidic residues; that stretch reads ACMEDESENSY. 2 disordered regions span residues 202–221 and 258–284; these read ACME…PSHQ and MNFY…SSQL. The span at 273–284 shows a compositional bias: polar residues; sequence LPSNSCASSSQL.

The protein belongs to the nuclear hormone receptor family.

It localises to the nucleus. Functionally, orphan nuclear receptor. This is Nuclear hormone receptor family member nhr-48 (nhr-48) from Caenorhabditis elegans.